The following is a 562-amino-acid chain: Formate--tetrahydrofolate ligase (562 aa).

71–78 (TPAGEGKS) serves as a coordination point for ATP.

Belongs to the formate--tetrahydrofolate ligase family.

The enzyme catalyses (6S)-5,6,7,8-tetrahydrofolate + formate + ATP = (6R)-10-formyltetrahydrofolate + ADP + phosphate. It participates in one-carbon metabolism; tetrahydrofolate interconversion. The sequence is that of Formate--tetrahydrofolate ligase from Bacillus cereus (strain Q1).